Here is a 169-residue protein sequence, read N- to C-terminus: Neurotensin/neuromedin N (169 aa).

Positions 1–22 (MIGMNLQLVCLTLLAFSSWSLC) are cleaved as a signal peptide.

Belongs to the neurotensin family. Interacts with NTSR1. Interacts with SORT1. Interacts with SORL1. Post-translationally, neurotensin is cleaved and degraded by Angiotensin-converting enzyme (ACE) and neprilysin (MME).

Its subcellular location is the secreted. The protein localises to the cytoplasmic vesicle. It is found in the secretory vesicle. Neurotensin may play an endocrine or paracrine role in the regulation of fat metabolism. It causes contraction of smooth muscle. This is Neurotensin/neuromedin N (Nts) from Rattus norvegicus (Rat).